Consider the following 278-residue polypeptide: S-formylglutathione hydrolase YeiG (278 aa).

Residues serine 145, aspartate 223, and histidine 256 each act as charge relay system in the active site.

It belongs to the esterase D family.

The enzyme catalyses S-formylglutathione + H2O = formate + glutathione + H(+). Functionally, serine hydrolase involved in the detoxification of formaldehyde. Hydrolyzes S-formylglutathione to glutathione and formate. The chain is S-formylglutathione hydrolase YeiG (yeiG) from Shigella flexneri serotype 5b (strain 8401).